The following is a 446-amino-acid chain: NAD(P)H sulfur oxidoreductase (CoA-dependent) (446 aa).

17–18 (AA) contacts FAD. Arg-28 provides a ligand contact to CoA. Residues 39 to 40 (EA) and 46 to 48 (HAP) contribute to the FAD site. CoA-binding positions include 45 to 49 (SHAPC), 66 to 67 (HY), and Arg-76. Residue Cys-49 is the Redox-active of the active site. Val-86, Asp-284, and Ala-302 together coordinate FAD. 2 residues coordinate CoA: Asn-306 and Lys-362. Residue Tyr-426 coordinates FAD. Positions 434 and 442 each coordinate CoA.

This sequence belongs to the class-III pyridine nucleotide-disulfide oxidoreductase family. FAD serves as cofactor.

The catalysed reaction is hydrogen sulfide + NADP(+) = sulfur + NADPH. It catalyses the reaction hydrogen sulfide + NAD(+) = sulfur + NADH. Its function is as follows. Catalyzes the CoA-dependent reduction of elemental sulfur (S(0)) to produce hydrogen sulfide. The polypeptide is NAD(P)H sulfur oxidoreductase (CoA-dependent) (Pyrococcus abyssi (strain GE5 / Orsay)).